The chain runs to 542 residues: Chaperonin GroEL (542 aa).

ATP is bound by residues 29 to 32 (TLGP), Lys50, 86 to 90 (DGTTT), Gly414, and Asp494.

Belongs to the chaperonin (HSP60) family. In terms of assembly, forms a cylinder of 14 subunits composed of two heptameric rings stacked back-to-back. Interacts with the co-chaperonin GroES.

The protein localises to the cytoplasm. The enzyme catalyses ATP + H2O + a folded polypeptide = ADP + phosphate + an unfolded polypeptide.. Functionally, together with its co-chaperonin GroES, plays an essential role in assisting protein folding. The GroEL-GroES system forms a nano-cage that allows encapsulation of the non-native substrate proteins and provides a physical environment optimized to promote and accelerate protein folding. This is Chaperonin GroEL from Cytophaga hutchinsonii (strain ATCC 33406 / DSM 1761 / CIP 103989 / NBRC 15051 / NCIMB 9469 / D465).